The primary structure comprises 412 residues: DNA replication and repair protein RecF (412 aa).

ATP is bound at residue 30 to 37 (GANGAGKT). The interval 369–412 (LQVRPGGGTAAVTPDPEYARGEATAANGAASAPTGADAASTSRD) is disordered. The span at 389 to 412 (GEATAANGAASAPTGADAASTSRD) shows a compositional bias: low complexity.

Belongs to the RecF family.

The protein resides in the cytoplasm. Functionally, the RecF protein is involved in DNA metabolism; it is required for DNA replication and normal SOS inducibility. RecF binds preferentially to single-stranded, linear DNA. It also seems to bind ATP. The chain is DNA replication and repair protein RecF from Salinibacter ruber (strain DSM 13855 / M31).